A 376-amino-acid chain; its full sequence is Glucose-1-phosphate adenylyltransferase (376 aa).

Alpha-D-glucose 1-phosphate-binding positions include Tyr-101, Gly-166, 181 to 182 (EK), and Ser-192.

It belongs to the bacterial/plant glucose-1-phosphate adenylyltransferase family. Homotetramer.

It catalyses the reaction alpha-D-glucose 1-phosphate + ATP + H(+) = ADP-alpha-D-glucose + diphosphate. It participates in glycan biosynthesis; glycogen biosynthesis. Involved in the biosynthesis of ADP-glucose, a building block required for the elongation reactions to produce glycogen. Catalyzes the reaction between ATP and alpha-D-glucose 1-phosphate (G1P) to produce pyrophosphate and ADP-Glc. This is Glucose-1-phosphate adenylyltransferase from Bacillus cereus (strain Q1).